A 101-amino-acid chain; its full sequence is Apolipoprotein C-II (101 aa).

The N-terminal stretch at 1-22 (MGTRYLLVLLLVLLVLGFEVQG) is a signal peptide. Residues 66–74 (TMDEKIRDI) are lipid binding. A lipoprotein lipase cofactor region spans residues 78 to 101 (STAAVSTYAGIFTDQLLSMLKGDS).

This sequence belongs to the apolipoprotein C2 family. In terms of processing, proapolipoprotein C-II is synthesized as a sialic acid containing glycoprotein which is subsequently desialylated prior to its proteolytic processing. Proapolipoprotein C-II, the major form found in plasma undergoes proteolytic cleavage of its N-terminal hexapeptide to generate apolipoprotein C-II, which occurs as the minor form in plasma. Highly expressed in the liver. Moderately expressed in the ileum, jejunum and ovary.

Its subcellular location is the secreted. Component of chylomicrons, very low-density lipoproteins (VLDL), low-density lipoproteins (LDL), and high-density lipoproteins (HDL) in plasma. Plays an important role in lipoprotein metabolism as an activator of lipoprotein lipase. Both proapolipoprotein C-II and apolipoprotein C-II can activate lipoprotein lipase. The sequence is that of Apolipoprotein C-II (APOC2) from Canis lupus familiaris (Dog).